The sequence spans 208 residues: 2-phospho-L-lactate guanylyltransferase (208 aa).

Belongs to the CofC family. In terms of assembly, homodimer.

The catalysed reaction is (2S)-2-phospholactate + GTP + H(+) = (2S)-lactyl-2-diphospho-5'-guanosine + diphosphate. Its pathway is cofactor biosynthesis; coenzyme F420 biosynthesis. Its function is as follows. Guanylyltransferase that catalyzes the activation of (2S)-2-phospholactate (2-PL) as (2S)-lactyl-2-diphospho-5'-guanosine, via the condensation of 2-PL with GTP. It is involved in the biosynthesis of coenzyme F420, a hydride carrier cofactor. The sequence is that of 2-phospho-L-lactate guanylyltransferase from Methanosarcina acetivorans (strain ATCC 35395 / DSM 2834 / JCM 12185 / C2A).